The primary structure comprises 296 residues: Cytidine deaminase (296 aa).

2 CMP/dCMP-type deaminase domains span residues 48-168 and 187-296; these read DVDA…FGPV and QNVN…FIEE. Position 89 to 91 (89 to 91) interacts with substrate; sequence NME. Zn(2+) is bound at residue histidine 102. Glutamate 104 serves as the catalytic Proton donor. Residues cysteine 129 and cysteine 132 each contribute to the Zn(2+) site.

It belongs to the cytidine and deoxycytidylate deaminase family. As to quaternary structure, homodimer. Requires Zn(2+) as cofactor.

It catalyses the reaction cytidine + H2O + H(+) = uridine + NH4(+). The enzyme catalyses 2'-deoxycytidine + H2O + H(+) = 2'-deoxyuridine + NH4(+). In terms of biological role, this enzyme scavenges exogenous and endogenous cytidine and 2'-deoxycytidine for UMP synthesis. This chain is Cytidine deaminase, found in Pectobacterium atrosepticum (strain SCRI 1043 / ATCC BAA-672) (Erwinia carotovora subsp. atroseptica).